Consider the following 74-residue polypeptide: uncharacterized protein (74 aa).

Residues 1–19 (MNPGFDAVDQETAAAQAVA) form the signal peptide.

This is an uncharacterized protein from Mycobacterium tuberculosis (strain ATCC 25618 / H37Rv).